Consider the following 79-residue polypeptide: Exodeoxyribonuclease 7 small subunit (79 aa).

The protein belongs to the XseB family. As to quaternary structure, heterooligomer composed of large and small subunits.

The protein localises to the cytoplasm. It carries out the reaction Exonucleolytic cleavage in either 5'- to 3'- or 3'- to 5'-direction to yield nucleoside 5'-phosphates.. Functionally, bidirectionally degrades single-stranded DNA into large acid-insoluble oligonucleotides, which are then degraded further into small acid-soluble oligonucleotides. The protein is Exodeoxyribonuclease 7 small subunit of Shouchella clausii (strain KSM-K16) (Alkalihalobacillus clausii).